Consider the following 244-residue polypeptide: tRNA (guanine-N(7)-)-methyltransferase (244 aa).

Polar residues predominate over residues 1–10 (MSDTPQSPAQ). Residues 1–20 (MSDTPQSPAQGSLAEHDEAR) are disordered. 4 residues coordinate S-adenosyl-L-methionine: Glu74, Glu99, Asp126, and Asp149. Asp149 is an active-site residue. Residues Lys153, Asp185, and 222–225 (TKFE) contribute to the substrate site.

It belongs to the class I-like SAM-binding methyltransferase superfamily. TrmB family.

It catalyses the reaction guanosine(46) in tRNA + S-adenosyl-L-methionine = N(7)-methylguanosine(46) in tRNA + S-adenosyl-L-homocysteine. Its pathway is tRNA modification; N(7)-methylguanine-tRNA biosynthesis. Catalyzes the formation of N(7)-methylguanine at position 46 (m7G46) in tRNA. This chain is tRNA (guanine-N(7)-)-methyltransferase, found in Pseudomonas aeruginosa (strain UCBPP-PA14).